The chain runs to 333 residues: NADH-quinone oxidoreductase subunit H (333 aa).

Helical transmembrane passes span 8-28 (VLAA…YLVW), 75-95 (ILFM…FVTI), 108-128 (IGLL…LLAG), 154-174 (MLIT…IEIV), 191-211 (PGLF…CSLA), 251-271 (IVIG…CPFG), 273-293 (FPGV…FIWI), and 312-332 (ILIP…KVFA).

This sequence belongs to the complex I subunit 1 family. As to quaternary structure, NDH-1 is composed of 14 different subunits. Subunits NuoA, H, J, K, L, M, N constitute the membrane sector of the complex.

The protein resides in the cell inner membrane. It catalyses the reaction a quinone + NADH + 5 H(+)(in) = a quinol + NAD(+) + 4 H(+)(out). Its function is as follows. NDH-1 shuttles electrons from NADH, via FMN and iron-sulfur (Fe-S) centers, to quinones in the respiratory chain. The immediate electron acceptor for the enzyme in this species is believed to be ubiquinone. Couples the redox reaction to proton translocation (for every two electrons transferred, four hydrogen ions are translocated across the cytoplasmic membrane), and thus conserves the redox energy in a proton gradient. This subunit may bind ubiquinone. This Desulfotalea psychrophila (strain LSv54 / DSM 12343) protein is NADH-quinone oxidoreductase subunit H.